Consider the following 132-residue polypeptide: Small ribosomal subunit protein uS8 (132 aa).

This sequence belongs to the universal ribosomal protein uS8 family. Part of the 30S ribosomal subunit. Contacts proteins S5 and S12.

In terms of biological role, one of the primary rRNA binding proteins, it binds directly to 16S rRNA central domain where it helps coordinate assembly of the platform of the 30S subunit. The sequence is that of Small ribosomal subunit protein uS8 from Rhodococcus erythropolis (strain PR4 / NBRC 100887).